The primary structure comprises 453 residues: Probable phenylalanine--tRNA ligase, mitochondrial (453 aa).

Residues 1-27 (MLLTLRVQGARHWLKSTRCLASSAAPA) constitute a mitochondrion transit peptide. Substrate-binding positions include 142–145 (TAHQ), R164, 171–173 (THY), 178–180 (QAD), E285, and F310. The FDX-ACB domain occupies 356–453 (SHYPQCTNDL…SVDSFNVQIR (98 aa)).

The protein belongs to the class-II aminoacyl-tRNA synthetase family.

It localises to the mitochondrion matrix. The enzyme catalyses tRNA(Phe) + L-phenylalanine + ATP = L-phenylalanyl-tRNA(Phe) + AMP + diphosphate + H(+). Is responsible for the charging of tRNA(Phe) with phenylalanine in mitochondrial translation. This chain is Probable phenylalanine--tRNA ligase, mitochondrial, found in Drosophila melanogaster (Fruit fly).